Here is a 1527-residue protein sequence, read N- to C-terminus: uncharacterized protein (1527 aa).

Coiled-coil stretches lie at residues Asn-262 to Glu-293, Gln-699 to Leu-751, Asn-905 to Ile-932, and Lys-1217 to Ser-1255. A disordered region spans residues Thr-683–Gln-734. Over residues Gln-700–Asp-728 the composition is skewed to low complexity.

This is an uncharacterized protein from Dictyostelium discoideum (Social amoeba).